A 328-amino-acid chain; its full sequence is GMP reductase (328 aa).

Catalysis depends on Cys176, which acts as the Thioimidate intermediate. 205 to 228 (IIADGGIRTHGDIAKSIRFGASMI) provides a ligand contact to NADP(+).

It belongs to the IMPDH/GMPR family. GuaC type 2 subfamily.

The catalysed reaction is IMP + NH4(+) + NADP(+) = GMP + NADPH + 2 H(+). Catalyzes the irreversible NADPH-dependent deamination of GMP to IMP. It functions in the conversion of nucleobase, nucleoside and nucleotide derivatives of G to A nucleotides, and in maintaining the intracellular balance of A and G nucleotides. The protein is GMP reductase of Streptococcus pneumoniae (strain JJA).